The following is a 296-amino-acid chain: 5,10-methylenetetrahydrofolate reductase (296 aa).

E28 functions as the Proton donor/acceptor in the catalytic mechanism. Residue T59 coordinates NADH. FAD-binding residues include Y60, A62, H88, R118, G119, D120, A132, Y152, H156, A159, D165, N168, R171, and K172. (6S)-5-methyl-5,6,7,8-tetrahydrofolate is bound at residue D120. Q183 is an NADH binding site. (6S)-5-methyl-5,6,7,8-tetrahydrofolate is bound by residues Q183, Q219, and R279.

The protein belongs to the methylenetetrahydrofolate reductase family. In terms of assembly, homotetramer. Requires FAD as cofactor.

It catalyses the reaction (6S)-5-methyl-5,6,7,8-tetrahydrofolate + NAD(+) = (6R)-5,10-methylene-5,6,7,8-tetrahydrofolate + NADH + H(+). The protein operates within one-carbon metabolism; tetrahydrofolate interconversion. It functions in the pathway amino-acid biosynthesis; L-methionine biosynthesis via de novo pathway. Its function is as follows. Catalyzes the NADH-dependent reduction of 5,10-methylenetetrahydrofolate to 5-methyltetrahydrofolate. Is required to provide the methyl group necessary for methionine synthetase to convert homocysteine to methionine; the methyl group is given by 5-methyltetrahydrofolate. Can also use NADPH as the reductant, but much less effectively than NADH. In Escherichia coli (strain K12), this protein is 5,10-methylenetetrahydrofolate reductase.